A 485-amino-acid polypeptide reads, in one-letter code: Aspartyl/glutamyl-tRNA(Asn/Gln) amidotransferase subunit B (485 aa).

This sequence belongs to the GatB/GatE family. GatB subfamily. As to quaternary structure, heterotrimer of A, B and C subunits.

The enzyme catalyses L-glutamyl-tRNA(Gln) + L-glutamine + ATP + H2O = L-glutaminyl-tRNA(Gln) + L-glutamate + ADP + phosphate + H(+). The catalysed reaction is L-aspartyl-tRNA(Asn) + L-glutamine + ATP + H2O = L-asparaginyl-tRNA(Asn) + L-glutamate + ADP + phosphate + 2 H(+). Allows the formation of correctly charged Asn-tRNA(Asn) or Gln-tRNA(Gln) through the transamidation of misacylated Asp-tRNA(Asn) or Glu-tRNA(Gln) in organisms which lack either or both of asparaginyl-tRNA or glutaminyl-tRNA synthetases. The reaction takes place in the presence of glutamine and ATP through an activated phospho-Asp-tRNA(Asn) or phospho-Glu-tRNA(Gln). In Borrelia turicatae (strain 91E135), this protein is Aspartyl/glutamyl-tRNA(Asn/Gln) amidotransferase subunit B.